Consider the following 139-residue polypeptide: Small ribosomal subunit protein bS6 (139 aa).

Residues Thr-97–Glu-139 form a disordered region. Over residues Lys-104–Glu-139 the composition is skewed to basic and acidic residues.

Belongs to the bacterial ribosomal protein bS6 family.

In terms of biological role, binds together with bS18 to 16S ribosomal RNA. The polypeptide is Small ribosomal subunit protein bS6 (Shewanella sediminis (strain HAW-EB3)).